Here is a 399-residue protein sequence, read N- to C-terminus: Elongation factor Tu (399 aa).

In terms of domain architecture, tr-type G spans 10 to 207; sequence KPHVNVGTIG…ALDSYIPEPV (198 aa). The G1 stretch occupies residues 19-26; it reads GHIDHGKT. 19–26 is a GTP binding site; it reads GHIDHGKT. Threonine 26 contributes to the Mg(2+) binding site. The tract at residues 60–64 is G2; sequence GITIN. Residues 81–84 form a G3 region; it reads DCPG. GTP-binding positions include 81 to 85 and 136 to 139; these read DCPGH and NKVD. Residues 136–139 are G4; sequence NKVD. The interval 174-176 is G5; it reads SAL.

Belongs to the TRAFAC class translation factor GTPase superfamily. Classic translation factor GTPase family. EF-Tu/EF-1A subfamily. Monomer.

It is found in the cytoplasm. It carries out the reaction GTP + H2O = GDP + phosphate + H(+). GTP hydrolase that promotes the GTP-dependent binding of aminoacyl-tRNA to the A-site of ribosomes during protein biosynthesis. This chain is Elongation factor Tu, found in Pseudothermotoga lettingae (strain ATCC BAA-301 / DSM 14385 / NBRC 107922 / TMO) (Thermotoga lettingae).